Here is a 167-residue protein sequence, read N- to C-terminus: Peptide deformylase (167 aa).

Fe cation contacts are provided by Cys-91 and His-133. The active site involves Glu-134. His-137 is a binding site for Fe cation.

The protein belongs to the polypeptide deformylase family. Fe(2+) is required as a cofactor.

The catalysed reaction is N-terminal N-formyl-L-methionyl-[peptide] + H2O = N-terminal L-methionyl-[peptide] + formate. In terms of biological role, removes the formyl group from the N-terminal Met of newly synthesized proteins. Requires at least a dipeptide for an efficient rate of reaction. N-terminal L-methionine is a prerequisite for activity but the enzyme has broad specificity at other positions. This chain is Peptide deformylase, found in Nitrosococcus oceani (strain ATCC 19707 / BCRC 17464 / JCM 30415 / NCIMB 11848 / C-107).